The chain runs to 473 residues: Hyaluronidase-2 (473 aa).

The N-terminal stretch at 1-20 is a signal peptide; it reads MRAGLGPIITLALVLEVAWA. 2 cysteine pairs are disulfide-bonded: Cys-47-Cys-340 and Cys-211-Cys-227. Residues Asn-74 and Asn-103 are each glycosylated (N-linked (GlcNAc...) asparagine). Glu-135 (proton donor) is an active-site residue. N-linked (GlcNAc...) asparagine glycosylation is present at Asn-357. The EGF-like domain maps to 361 to 439; the sequence is ATQYCSWTQC…YLGWGGEQCQ (79 aa). 3 cysteine pairs are disulfide-bonded: Cys-365–Cys-376, Cys-370–Cys-427, and Cys-429–Cys-438. A lipid anchor (GPI-anchor amidated aspartate) is attached at Asp-448. The propeptide at 449 to 473 is removed in mature form; sequence ASRAWAGAHLASLLGLVAMTLTWTL.

The protein belongs to the glycosyl hydrolase 56 family. As to quaternary structure, interacts with MST1R.

The protein localises to the cell membrane. It carries out the reaction Random hydrolysis of (1-&gt;4)-linkages between N-acetyl-beta-D-glucosamine and D-glucuronate residues in hyaluronate.. Functionally, catalyzes hyaluronan degradation into small fragments that are endocytosed and degraded in lysosomes by HYAL1 and exoglycosidases. Essential for the breakdown of extracellular matrix hyaluronan. This chain is Hyaluronidase-2 (Hyal2), found in Rattus norvegicus (Rat).